The chain runs to 667 residues: Polypeptide N-acetylgalactosaminyltransferase 3 (667 aa).

Residues 1–12 lie on the Cytoplasmic side of the membrane; sequence MGLRFQQLKKLW. A helical; Signal-anchor for type II membrane protein membrane pass occupies residues 13-35; sequence LLYLFLLFFAFFMFAISINLYVA. Residues 36-667 lie on the Lumenal side of the membrane; the sequence is SIQGGDAEMR…WGFIPLPWRM (632 aa). Asn75 and Asn129 each carry an N-linked (GlcNAc...) asparagine glycan. Cystine bridges form between Cys140/Cys375, Cys366/Cys446, Cys526/Cys547, Cys572/Cys601, and Cys626/Cys649. The catalytic subdomain A stretch occupies residues 149–259; sequence LPSTSVIIVF…RGWLEPLLSR (111 aa). 2 residues coordinate substrate: Asp190 and Arg220. Positions 243 and 245 each coordinate Mn(2+). Asn279 and Asn313 each carry an N-linked (GlcNAc...) asparagine glycan. Positions 321 to 383 are catalytic subdomain B; it reads PIATPGMAGG…PCSHVGHVFR (63 aa). Residue Trp352 participates in substrate binding. Residue His380 coordinates Mn(2+). Substrate contacts are provided by Arg383 and Tyr388. Asn433 is a glycosylation site (N-linked (GlcNAc...) asparagine). The region spanning 513 to 661 is the Ricin B-type lectin domain; sequence EELMALIDLE…KDITQKWGFI (149 aa). N-linked (GlcNAc...) asparagine glycosylation occurs at Asn590.

Belongs to the glycosyltransferase 2 family. GalNAc-T subfamily. Mn(2+) serves as cofactor. In terms of tissue distribution, expressed in developing oocytes and egg chambers. During embryonic stages 9-11, expressed in the primordiums of the foregut, midgut and hindgut. During embryonic stages 12-13, expression is found uniquely in the posterior spiracle. During embryonic stages 14-17, expressed in the pharynx, esophagus and posterior spiracles. Expression observed in the epidermis during embryonic stages 16-17. In third instar larvae, expressed ubiquitously in wing, with increased expression in pleura and notum, eye-antennal, leg and haltere imaginal disks.

The protein localises to the golgi apparatus membrane. The catalysed reaction is L-seryl-[protein] + UDP-N-acetyl-alpha-D-galactosamine = a 3-O-[N-acetyl-alpha-D-galactosaminyl]-L-seryl-[protein] + UDP + H(+). It catalyses the reaction L-threonyl-[protein] + UDP-N-acetyl-alpha-D-galactosamine = a 3-O-[N-acetyl-alpha-D-galactosaminyl]-L-threonyl-[protein] + UDP + H(+). It participates in protein modification; protein glycosylation. Its function is as follows. Catalyzes the initial reaction in O-linked oligosaccharide biosynthesis, the transfer of an N-acetyl-D-galactosamine residue to a serine or threonine residue on the protein receptor. It can both act as a peptide transferase that transfers GalNAc onto unmodified peptide substrates, and as a glycopeptide transferase that requires the prior addition of a GalNAc on a peptide before adding additional GalNAc moieties. Prefers EA2 as substrate. Has weak activity toward Muc5AC-3, -13 and -3/13 substrates. Plays a critical role in the regulation of integrin-mediated cell adhesion during wing development by influencing, via glycosylation, the secretion and localization of the integrin ligand Tig to the basal cell layer interface. Might have a role in protein O-glycosylation in the Golgi and thereby in establishing and/or maintaining a proper secretory apparatus structure. Together with Pgant35A, regulates integrin levels and activity-dependent integrin signaling at the synapse in neurons and muscles. This chain is Polypeptide N-acetylgalactosaminyltransferase 3, found in Drosophila melanogaster (Fruit fly).